We begin with the raw amino-acid sequence, 258 residues long: Snake venom serine protease PTLE1 (258 aa).

Residues Met-1–Ala-18 form the signal peptide. Positions Gln-19 to Leu-24 are excised as a propeptide. One can recognise a Peptidase S1 domain in the interval Val-25–Ala-249. 6 disulfide bridges follow: Cys-31/Cys-163, Cys-50/Cys-66, Cys-98/Cys-256, Cys-142/Cys-210, Cys-174/Cys-189, and Cys-200/Cys-225. Asn-44 is a glycosylation site (N-linked (GlcNAc...) asparagine). The active-site Charge relay system is the His-65. Asn-79 and Asn-103 each carry an N-linked (GlcNAc...) asparagine glycan. Asp-110 serves as the catalytic Charge relay system. Asn-121 carries N-linked (GlcNAc...) asparagine glycosylation. The Charge relay system role is filled by Ser-204.

It belongs to the peptidase S1 family. Snake venom subfamily. Monomer. In terms of tissue distribution, expressed by the venom gland.

The protein resides in the secreted. In terms of biological role, snake venom serine protease that may act in the hemostasis system of the prey. The chain is Snake venom serine protease PTLE1 from Gloydius halys (Chinese water mocassin).